The sequence spans 247 residues: Homeobox protein BarH-like 1b (247 aa).

Disordered stretches follow at residues Arg118–Ser138 and Gly197–Glu247. The segment at residues Gly135 to Val194 is a DNA-binding region (homeobox). Positions Glu223–Pro234 are enriched in basic and acidic residues.

This sequence belongs to the BAR homeobox family. In terms of assembly, interacts with serum response factor (SRF). As to expression, expressed in smooth muscle cells of the upper digestive organs and their attached arteries and to craniofacial structures.

Its subcellular location is the nucleus. Functionally, transcription factor which is involved with the serum response factor (SRF) in the smooth muscle cell-specific transcription of the beta-tropomyosin gene in the upper digestive organs and their attached arteries. This chain is Homeobox protein BarH-like 1b (BARX1B), found in Gallus gallus (Chicken).